Consider the following 508-residue polypeptide: Lysine--tRNA ligase (508 aa).

E418 and E425 together coordinate Mg(2+).

Belongs to the class-II aminoacyl-tRNA synthetase family. As to quaternary structure, homodimer. Mg(2+) is required as a cofactor.

The protein localises to the cytoplasm. The catalysed reaction is tRNA(Lys) + L-lysine + ATP = L-lysyl-tRNA(Lys) + AMP + diphosphate. The chain is Lysine--tRNA ligase from Burkholderia multivorans (strain ATCC 17616 / 249).